The primary structure comprises 143 residues: UPF0102 protein Acid345_3985 (143 aa).

Belongs to the UPF0102 family.

The chain is UPF0102 protein Acid345_3985 from Koribacter versatilis (strain Ellin345).